Here is a 101-residue protein sequence, read N- to C-terminus: MTVRILAVCGNGQGSSMIMKMKVDQFLTQSNIDHTVNSCAVGEYKSELSGADIIIASTHIAGEITVTGNKYVVGVRNMLSPADFGPKLLEVIKEHFPQDVK.

A PTS EIIB type-2 domain is found at 1–100; sequence MTVRILAVCG…VIKEHFPQDV (100 aa). Cys-9 functions as the Phosphocysteine intermediate in the catalytic mechanism. Residue Cys-9 is modified to Phosphocysteine.

Its subcellular location is the cytoplasm. It carries out the reaction N(pros)-phospho-L-histidyl-[protein] + L-ascorbate(out) = L-ascorbate 6-phosphate(in) + L-histidyl-[protein]. In terms of biological role, the phosphoenolpyruvate-dependent sugar phosphotransferase system (sugar PTS), a major carbohydrate active transport system, catalyzes the phosphorylation of incoming sugar substrates concomitantly with their translocation across the cell membrane. The enzyme II UlaABC PTS system is involved in ascorbate transport. In Escherichia coli O157:H7, this protein is Ascorbate-specific PTS system EIIB component (ulaB).